Here is a 156-residue protein sequence, read N- to C-terminus: Small ribosomal subunit protein uS7 (156 aa).

This sequence belongs to the universal ribosomal protein uS7 family. In terms of assembly, part of the 30S ribosomal subunit. Contacts proteins S9 and S11.

Its function is as follows. One of the primary rRNA binding proteins, it binds directly to 16S rRNA where it nucleates assembly of the head domain of the 30S subunit. Is located at the subunit interface close to the decoding center, probably blocks exit of the E-site tRNA. The polypeptide is Small ribosomal subunit protein uS7 (Edwardsiella ictaluri (strain 93-146)).